A 297-amino-acid chain; its full sequence is 33 kDa chaperonin (297 aa).

Cystine bridges form between Cys232–Cys234 and Cys266–Cys269.

Belongs to the HSP33 family. In terms of processing, under oxidizing conditions two disulfide bonds are formed involving the reactive cysteines. Under reducing conditions zinc is bound to the reactive cysteines and the protein is inactive.

The protein localises to the cytoplasm. Its function is as follows. Redox regulated molecular chaperone. Protects both thermally unfolding and oxidatively damaged proteins from irreversible aggregation. Plays an important role in the bacterial defense system toward oxidative stress. This Azotobacter vinelandii (strain DJ / ATCC BAA-1303) protein is 33 kDa chaperonin.